Consider the following 512-residue polypeptide: uncharacterized protein (512 aa).

Transmembrane regions (helical) follow at residues 20–40 (IFPV…IYIW) and 222–242 (GIAL…FGYI). The Histidine kinase domain occupies 297–512 (EQLIQSIEQT…TLMCYQIPLV (216 aa)). Histidine 325 carries the phosphohistidine; by autocatalysis modification.

Autophosphorylated.

It is found in the cell membrane. It catalyses the reaction ATP + protein L-histidine = ADP + protein N-phospho-L-histidine.. Functionally, probable member of the two-component regulatory system SE_0166/SE_0165. May activate SE_0165 by phosphorylation. This is an uncharacterized protein from Staphylococcus epidermidis (strain ATCC 12228 / FDA PCI 1200).